We begin with the raw amino-acid sequence, 377 residues long: 3-dehydroquinate synthase (377 aa).

Residues 113 to 117 (GVIGD), 137 to 138 (TT), Lys-150, and Lys-159 contribute to the NAD(+) site. 3 residues coordinate Zn(2+): Glu-192, His-254, and His-273.

The protein belongs to the sugar phosphate cyclases superfamily. Dehydroquinate synthase family. The cofactor is Co(2+). Requires Zn(2+) as cofactor. NAD(+) serves as cofactor.

It is found in the cytoplasm. It carries out the reaction 7-phospho-2-dehydro-3-deoxy-D-arabino-heptonate = 3-dehydroquinate + phosphate. The protein operates within metabolic intermediate biosynthesis; chorismate biosynthesis; chorismate from D-erythrose 4-phosphate and phosphoenolpyruvate: step 2/7. Functionally, catalyzes the conversion of 3-deoxy-D-arabino-heptulosonate 7-phosphate (DAHP) to dehydroquinate (DHQ). The sequence is that of 3-dehydroquinate synthase from Bartonella tribocorum (strain CIP 105476 / IBS 506).